Reading from the N-terminus, the 962-residue chain is Leucine--tRNA ligase (962 aa).

Residues 68 to 79 (PYPSGAGLHVGH) carry the 'HIGH' region motif. A disordered region spans residues 559–582 (DYSPRTFDPDDANTSPETPLSRNE). The span at 570–579 (ANTSPETPLS) shows a compositional bias: polar residues. Residues 733–737 (KMGKS) carry the 'KMSKS' region motif. Lys-736 provides a ligand contact to ATP.

This sequence belongs to the class-I aminoacyl-tRNA synthetase family.

Its subcellular location is the cytoplasm. The enzyme catalyses tRNA(Leu) + L-leucine + ATP = L-leucyl-tRNA(Leu) + AMP + diphosphate. This chain is Leucine--tRNA ligase, found in Streptomyces avermitilis (strain ATCC 31267 / DSM 46492 / JCM 5070 / NBRC 14893 / NCIMB 12804 / NRRL 8165 / MA-4680).